We begin with the raw amino-acid sequence, 122 residues long: Large ribosomal subunit protein uL14 (122 aa).

Belongs to the universal ribosomal protein uL14 family. In terms of assembly, part of the 50S ribosomal subunit. Forms a cluster with proteins L3 and L19. In the 70S ribosome, L14 and L19 interact and together make contacts with the 16S rRNA in bridges B5 and B8.

Functionally, binds to 23S rRNA. Forms part of two intersubunit bridges in the 70S ribosome. This Chloroflexus aggregans (strain MD-66 / DSM 9485) protein is Large ribosomal subunit protein uL14.